The chain runs to 367 residues: Phosphoribosylaminoimidazole-succinocarboxamide synthase (367 aa).

This sequence belongs to the SAICAR synthetase family.

The catalysed reaction is 5-amino-1-(5-phospho-D-ribosyl)imidazole-4-carboxylate + L-aspartate + ATP = (2S)-2-[5-amino-1-(5-phospho-beta-D-ribosyl)imidazole-4-carboxamido]succinate + ADP + phosphate + 2 H(+). It participates in purine metabolism; IMP biosynthesis via de novo pathway; 5-amino-1-(5-phospho-D-ribosyl)imidazole-4-carboxamide from 5-amino-1-(5-phospho-D-ribosyl)imidazole-4-carboxylate: step 1/2. In Vibrio vulnificus (strain CMCP6), this protein is Phosphoribosylaminoimidazole-succinocarboxamide synthase.